The primary structure comprises 918 residues: Protein translocase subunit SecA (918 aa).

ATP is bound by residues glutamine 87, 105–109 (GEGKT), and aspartate 500. Residues 876-918 (AGALPVAETLERDTPESWRNTPRNAPCPCGSGKKYKHCHGQAR) form a disordered region. The Zn(2+) site is built by cysteine 902, cysteine 904, cysteine 913, and histidine 914. Residues 908-918 (KKYKHCHGQAR) are compositionally biased toward basic residues.

This sequence belongs to the SecA family. Monomer and homodimer. Part of the essential Sec protein translocation apparatus which comprises SecA, SecYEG and auxiliary proteins SecDF-YajC and YidC. Zn(2+) is required as a cofactor.

The protein localises to the cell inner membrane. Its subcellular location is the cytoplasm. It catalyses the reaction ATP + H2O + cellular proteinSide 1 = ADP + phosphate + cellular proteinSide 2.. Functionally, part of the Sec protein translocase complex. Interacts with the SecYEG preprotein conducting channel. Has a central role in coupling the hydrolysis of ATP to the transfer of proteins into and across the cell membrane, serving both as a receptor for the preprotein-SecB complex and as an ATP-driven molecular motor driving the stepwise translocation of polypeptide chains across the membrane. The polypeptide is Protein translocase subunit SecA (Rhodospirillum centenum (strain ATCC 51521 / SW)).